The sequence spans 657 residues: MMNRRHFIQISATSILALSANRFAMAKGKSDVDLRIVATTDVHSFLTDFDYYKDAPTDKFGFTRAASLIRQARAEVKNSVLVDNGDLIQGNPIADYQAAQGYKEGKSNPAIDCLNAMNYEVGTLGNHEFNYGLNYLADAIKQAKFPIVNSNVVKAGTEEPYFTPYVIQEKSVVDNQGKTHKLKIGYIGFVPPQIMVWDKANLQGKVETRDIVKTAQKYVPEMKKKGADIVVALAHTGPSDEPYQEGAENSAFYLADVPHIDAVIFGHSHRLFPNKEFAKSPNADIVNGTVKGIPESMAGYWANNISVVDLGLTEHKGKWIVTSGKAVLRPIYDIETKKALAKNDPEITALLKPVHEATRKYVSQPIGKATDNMYSYLALLQDDPTIQIVNQAQKAYVEKVAPSIAAMAGLPILSAGAPFKAGGRKNDPTGYTEVNKGKLTFRNAADLYLYPNTLVVVKATGEQLKEWLECSAGMFKQIDPTSDKPQSLIDWEGFRTYNFDVIDGVNYEYDLTKPARYDGECKLINPESHRVVNLTYQGKPVDPKAEFLIATNNYRAYGNKFPGTGDKHIVYASPDESRQILADYIKATSEKEGSVNPNADKNWRFVPITGNDKLDVRFETSPSEQAAKFIAEKAQYPMKQVGTDEIGFAVYQIDLSK.

Residues 1–26 (MMNRRHFIQISATSILALSANRFAMA) form the signal peptide. A divalent metal cation is bound by residues D41, H43, D86, N126, H235, H267, and H269. Substrate contacts are provided by residues Y450 and 554-559 (YRAYGN).

It belongs to the 5'-nucleotidase family. A divalent metal cation is required as a cofactor.

It is found in the periplasm. The catalysed reaction is a nucleoside 2',3'-cyclic phosphate + H2O = a nucleoside 3'-phosphate + H(+). It catalyses the reaction a ribonucleoside 3'-phosphate + H2O = a ribonucleoside + phosphate. Its function is as follows. This bifunctional enzyme catalyzes two consecutive reactions during ribonucleic acid degradation. Converts a 2',3'-cyclic nucleotide to a 3'-nucleotide and then the 3'-nucleotide to the corresponding nucleoside and phosphate. In Haemophilus influenzae (strain ATCC 51907 / DSM 11121 / KW20 / Rd), this protein is 2',3'-cyclic-nucleotide 2'-phosphodiesterase/3'-nucleotidase (cpdB).